Reading from the N-terminus, the 193-residue chain is Cytochrome c biogenesis ATP-binding export protein CcmA (193 aa).

The ABC transporter domain maps to 9-191 (LSASGLAILR…AAGFPVTAEV (183 aa)). 41 to 48 (GANGAGKT) contacts ATP.

The protein belongs to the ABC transporter superfamily. CcmA exporter (TC 3.A.1.107) family. The complex is composed of two ATP-binding proteins (CcmA) and two transmembrane proteins (CcmB).

The protein resides in the cell inner membrane. It catalyses the reaction heme b(in) + ATP + H2O = heme b(out) + ADP + phosphate + H(+). Part of the ABC transporter complex CcmAB involved in the biogenesis of c-type cytochromes; once thought to export heme, this seems not to be the case, but its exact role is uncertain. Responsible for energy coupling to the transport system. This chain is Cytochrome c biogenesis ATP-binding export protein CcmA, found in Hyphomonas neptunium (strain ATCC 15444).